A 118-amino-acid chain; its full sequence is SPbeta prophage-derived uncharacterized protein YomS (118 aa).

This chain is SPbeta prophage-derived uncharacterized protein YomS (yomS), found in Bacillus subtilis (strain 168).